The chain runs to 143 residues: MARPDMGGPKSSGGFGGPRSGGGFGGGGYGGGGGGGGGYGGGGGGGFGGRGGDRGDRGDRDDRGGEEGGRRGFGRRKVCRFCADKTLKVDYKDQSQMKYFLTERGKIIPRRISGNCAKHQREVATAVKRGRMLAILPYTVGGM.

Positions 1–72 (MARPDMGGPK…RGGEEGGRRG (72 aa)) are disordered. Over residues 10–50 (KSSGGFGGPRSGGGFGGGGYGGGGGGGGGYGGGGGGGFGGR) the composition is skewed to gly residues. Basic and acidic residues predominate over residues 51 to 70 (GGDRGDRGDRDDRGGEEGGR).

Belongs to the bacterial ribosomal protein bS18 family. In terms of assembly, part of the 30S ribosomal subunit. Forms a tight heterodimer with protein bS6.

Binds as a heterodimer with protein bS6 to the central domain of the 16S rRNA, where it helps stabilize the platform of the 30S subunit. This is Small ribosomal subunit protein bS18 from Anaeromyxobacter sp. (strain Fw109-5).